We begin with the raw amino-acid sequence, 474 residues long: tRNA-2-methylthio-N(6)-dimethylallyladenosine synthase (474 aa).

In terms of domain architecture, MTTase N-terminal spans 3–120 (KKLHIKTWGC…LPEMINSVRG (118 aa)). Cysteine 12, cysteine 49, cysteine 83, cysteine 157, cysteine 161, and cysteine 164 together coordinate [4Fe-4S] cluster. In terms of domain architecture, Radical SAM core spans 143–375 (RAEGPTAFVS…QERINQQAMA (233 aa)). Residues 378–441 (RRMLGTTQRI…PNSLRGKVVR (64 aa)) form the TRAM domain.

The protein belongs to the methylthiotransferase family. MiaB subfamily. Monomer. Requires [4Fe-4S] cluster as cofactor.

The protein resides in the cytoplasm. The catalysed reaction is N(6)-dimethylallyladenosine(37) in tRNA + (sulfur carrier)-SH + AH2 + 2 S-adenosyl-L-methionine = 2-methylsulfanyl-N(6)-dimethylallyladenosine(37) in tRNA + (sulfur carrier)-H + 5'-deoxyadenosine + L-methionine + A + S-adenosyl-L-homocysteine + 2 H(+). In terms of biological role, catalyzes the methylthiolation of N6-(dimethylallyl)adenosine (i(6)A), leading to the formation of 2-methylthio-N6-(dimethylallyl)adenosine (ms(2)i(6)A) at position 37 in tRNAs that read codons beginning with uridine. The protein is tRNA-2-methylthio-N(6)-dimethylallyladenosine synthase of Shigella boydii serotype 4 (strain Sb227).